The primary structure comprises 164 residues: Ribosomal RNA large subunit methyltransferase H (164 aa).

Gly-109 contributes to the S-adenosyl-L-methionine binding site.

Belongs to the RNA methyltransferase RlmH family. In terms of assembly, homodimer.

It is found in the cytoplasm. It catalyses the reaction pseudouridine(1915) in 23S rRNA + S-adenosyl-L-methionine = N(3)-methylpseudouridine(1915) in 23S rRNA + S-adenosyl-L-homocysteine + H(+). In terms of biological role, specifically methylates the pseudouridine at position 1915 (m3Psi1915) in 23S rRNA. In Methylobacterium radiotolerans (strain ATCC 27329 / DSM 1819 / JCM 2831 / NBRC 15690 / NCIMB 10815 / 0-1), this protein is Ribosomal RNA large subunit methyltransferase H.